Here is a 635-residue protein sequence, read N- to C-terminus: Extracellular metalloproteinase mep (635 aa).

An N-terminal signal peptide occupies residues Met1–Ala19. Positions His20 to Glu246 are excised as a propeptide. N-linked (GlcNAc...) asparagine glycosylation occurs at Asn287. The span at Thr290 to Leu309 shows a compositional bias: polar residues. The tract at residues Thr290–Asn311 is disordered. His430 is a binding site for Zn(2+). Glu431 is an active-site residue. His434 lines the Zn(2+) pocket.

Belongs to the peptidase M36 family. Requires Zn(2+) as cofactor.

It localises to the secreted. Secreted metalloproteinase that allows assimilation of proteinaceous substrates. In Aspergillus flavus (strain ATCC 200026 / FGSC A1120 / IAM 13836 / NRRL 3357 / JCM 12722 / SRRC 167), this protein is Extracellular metalloproteinase mep (mep).